Reading from the N-terminus, the 1034-residue chain is Tubulin glycylase 3D (1034 aa).

Polar residues-rich tracts occupy residues 1 to 13 (MINS…QTLN) and 131 to 146 (QVNS…QNDF). 3 disordered regions span residues 1 to 21 (MINS…SQMD), 131 to 166 (QVNS…STDY), and 189 to 208 (LNQQ…DNSQ). A compositionally biased stretch (basic residues) spans 151-161 (RKPKNPTTKKR). The span at 189 to 199 (LNQQNQQQQDL) shows a compositional bias: low complexity. Residues 571–930 (DINNVIDDEK…YGMAQKSGIK (360 aa)) form the TTL domain. ATP contacts are provided by residues 741–744 (QKYI), lysine 754, and aspartate 756. Residues 1002–1034 (HDQKQFSSQQANNIETYSRPQTAKSQTQSSKKL) are disordered.

It is found in the cytoplasm. Probable glycylase which modifies tubulin, generating side chains of glycine on the gamma-carboxyl groups of specific glutamate residues within the C-terminal tail of tubulin. In Tetrahymena thermophila (strain SB210), this protein is Tubulin glycylase 3D (TTLL3D).